Reading from the N-terminus, the 101-residue chain is ATP synthase subunit c (101 aa).

2 helical membrane-spanning segments follow: residues 31 to 51 (AFAY…GAGQ) and 81 to 101 (AISE…IFVG).

Belongs to the ATPase C chain family. F-type ATPases have 2 components, F(1) - the catalytic core - and F(0) - the membrane proton channel. F(1) has five subunits: alpha(3), beta(3), gamma(1), delta(1), epsilon(1). F(0) has three main subunits: a(1), b(2) and c(10-14). The alpha and beta chains form an alternating ring which encloses part of the gamma chain. F(1) is attached to F(0) by a central stalk formed by the gamma and epsilon chains, while a peripheral stalk is formed by the delta and b chains.

The protein resides in the cell membrane. In terms of biological role, f(1)F(0) ATP synthase produces ATP from ADP in the presence of a proton or sodium gradient. F-type ATPases consist of two structural domains, F(1) containing the extramembraneous catalytic core and F(0) containing the membrane proton channel, linked together by a central stalk and a peripheral stalk. During catalysis, ATP synthesis in the catalytic domain of F(1) is coupled via a rotary mechanism of the central stalk subunits to proton translocation. Its function is as follows. Key component of the F(0) channel; it plays a direct role in translocation across the membrane. A homomeric c-ring of between 10-14 subunits forms the central stalk rotor element with the F(1) delta and epsilon subunits. The polypeptide is ATP synthase subunit c (Mesomycoplasma hyopneumoniae (strain 232) (Mycoplasma hyopneumoniae)).